The primary structure comprises 212 residues: Thiamine-phosphate synthase (212 aa).

38–42 (QLREK) is a 4-amino-2-methyl-5-(diphosphooxymethyl)pyrimidine binding site. 2 residues coordinate Mg(2+): aspartate 71 and aspartate 90. 4-amino-2-methyl-5-(diphosphooxymethyl)pyrimidine is bound at residue lysine 138. Position 166 (glycine 166) interacts with 2-[(2R,5Z)-2-carboxy-4-methylthiazol-5(2H)-ylidene]ethyl phosphate.

Belongs to the thiamine-phosphate synthase family. Mg(2+) serves as cofactor.

It carries out the reaction 2-[(2R,5Z)-2-carboxy-4-methylthiazol-5(2H)-ylidene]ethyl phosphate + 4-amino-2-methyl-5-(diphosphooxymethyl)pyrimidine + 2 H(+) = thiamine phosphate + CO2 + diphosphate. The catalysed reaction is 2-(2-carboxy-4-methylthiazol-5-yl)ethyl phosphate + 4-amino-2-methyl-5-(diphosphooxymethyl)pyrimidine + 2 H(+) = thiamine phosphate + CO2 + diphosphate. The enzyme catalyses 4-methyl-5-(2-phosphooxyethyl)-thiazole + 4-amino-2-methyl-5-(diphosphooxymethyl)pyrimidine + H(+) = thiamine phosphate + diphosphate. It functions in the pathway cofactor biosynthesis; thiamine diphosphate biosynthesis; thiamine phosphate from 4-amino-2-methyl-5-diphosphomethylpyrimidine and 4-methyl-5-(2-phosphoethyl)-thiazole: step 1/1. In terms of biological role, condenses 4-methyl-5-(beta-hydroxyethyl)thiazole monophosphate (THZ-P) and 2-methyl-4-amino-5-hydroxymethyl pyrimidine pyrophosphate (HMP-PP) to form thiamine monophosphate (TMP). The chain is Thiamine-phosphate synthase from Chlamydia caviae (strain ATCC VR-813 / DSM 19441 / 03DC25 / GPIC) (Chlamydophila caviae).